The sequence spans 177 residues: UPF0251 protein Cag_0886 (177 aa).

The disordered stretch occupies residues Gly147–Glu177.

Belongs to the UPF0251 family.

The sequence is that of UPF0251 protein Cag_0886 from Chlorobium chlorochromatii (strain CaD3).